Reading from the N-terminus, the 4307-residue chain is Cytoplasmic dynein 2 heavy chain 1 (4307 aa).

Positions 1 to 1650 (MANGTADVRK…CVQMVDSEFQ (1650 aa)) are stem. ATP is bound at residue 145-152 (LGIVLRRS). The stretch at 1074-1103 (NTLDKSAKLIKEKKIEFDDLEVTRKKLVDD) forms a coiled coil. AAA stretches follow at residues 1651–1875 (YTYE…VLRG), 1938–2161 (ELSA…KQND), 2251–2505 (ADDF…WVLG), and 2617–2863 (HYGR…ESCK). ATP contacts are provided by residues 1689 to 1696 (GPAGTGKT), 1979 to 1986 (GPSGAGKS), 2291 to 2298 (GPEGCGKG), and 2655 to 2662 (GRSGVGRR). The interval 2881–3169 (AISSSKKKEL…AEVSKAQETI (289 aa)) is stalk. Coiled coils occupy residues 2897-2982 (LQAG…KEVQ), 3109-3200 (LETE…LATL), and 3408-3442 (IQHEKPDLEEQKTKLLQQEEDKKIQLAKLEESLLE). AAA regions lie at residues 3244 to 3473 (LCTE…LIQE) and 3690 to 3905 (MALF…IIDR).

This sequence belongs to the dynein heavy chain family. The cytoplasmic dynein complex 2 is probably composed by a heavy chain DYNC2H1 homodimer and a number of DYNC2LI1 light intermediate chains.

The protein resides in the cytoplasm. Its subcellular location is the cytoskeleton. It localises to the cilium axoneme. It is found in the cell membrane. Its function is as follows. May function as a motor for intraflagellar retrograde transport. Functions in cilia biogenesis. May play a role in transport between endoplasmic reticulum and Golgi or organization of the Golgi in cells. In Homo sapiens (Human), this protein is Cytoplasmic dynein 2 heavy chain 1 (DYNC2H1).